A 375-amino-acid polypeptide reads, in one-letter code: Succinyl-diaminopimelate desuccinylase (375 aa).

His66 serves as a coordination point for Zn(2+). Residue Asp68 is part of the active site. Asp99 is a Zn(2+) binding site. Glu133 acts as the Proton acceptor in catalysis. Zn(2+) is bound by residues Glu134, Glu162, and His348.

It belongs to the peptidase M20A family. DapE subfamily. In terms of assembly, homodimer. The cofactor is Zn(2+). Co(2+) serves as cofactor.

It catalyses the reaction N-succinyl-(2S,6S)-2,6-diaminopimelate + H2O = (2S,6S)-2,6-diaminopimelate + succinate. It participates in amino-acid biosynthesis; L-lysine biosynthesis via DAP pathway; LL-2,6-diaminopimelate from (S)-tetrahydrodipicolinate (succinylase route): step 3/3. In terms of biological role, catalyzes the hydrolysis of N-succinyl-L,L-diaminopimelic acid (SDAP), forming succinate and LL-2,6-diaminopimelate (DAP), an intermediate involved in the bacterial biosynthesis of lysine and meso-diaminopimelic acid, an essential component of bacterial cell walls. This Salmonella typhi protein is Succinyl-diaminopimelate desuccinylase.